We begin with the raw amino-acid sequence, 1025 residues long: AP-2 complex subunit alpha (1025 aa).

Positions 713–737 (RSIMVPMPPPSRRNTIDDVNSKISS) are disordered. Thr-727 carries the post-translational modification Phosphothreonine. Phosphoserine is present on Ser-733.

Belongs to the adaptor complexes large subunit family. Adaptor protein complex 2 (AP-2) is a heterotetramer composed of two large adaptins (alpha-type subunit APL3 and beta-type subunit APL1), a medium chain (mu-type subunit APM4) and a small adaptin (sigma-type subunit APS2).

The protein localises to the cell membrane. It is found in the membrane. Its subcellular location is the coated pit. Adaptins are components of the adaptor complexes which link clathrin to receptors in coated vesicles. Clathrin-associated protein complexes are believed to interact with the cytoplasmic tails of membrane proteins, leading to their selection and concentration. Alpha adaptin is a subunit of the plasma membrane adaptor. Facilitates interaction between APL1 and APS2. The sequence is that of AP-2 complex subunit alpha (APL3) from Saccharomyces cerevisiae (strain ATCC 204508 / S288c) (Baker's yeast).